A 61-amino-acid chain; its full sequence is uncharacterized protein (61 aa).

This is an uncharacterized protein from Acidianus convivator (ABV).